The following is a 78-amino-acid chain: UPF0349 protein SAHV_0934 (78 aa).

The protein belongs to the UPF0349 family.

The chain is UPF0349 protein SAHV_0934 from Staphylococcus aureus (strain Mu3 / ATCC 700698).